The chain runs to 295 residues: MHAKIMDALGSLPSDLASAVKPIFEDANFDATLSPEQFTTLLSTTHMTDSELRVALLPIAAAYSVAPISKFFVGAIVRGESGRLYFGANMEFVGASLSQTIHAEQSAISHAWIKGETGITDITINYSPCGHCRQFMNELTTAKTLIVQLPEREEQTLQQYLPESFGPADLNITDALLGKIDHGMTIKETDEFVAIACKAANGSHAPYTKNYSGVALKATDGKVFTGKYAENAAFNPSLPPLQVALVNMNMAGYALTEIAEAALVEKADSTISHLSDTQTTLEALNPDIPLTYVAA.

CMP/dCMP-type deaminase domains lie at 48–168 and 187–295; these read TDSE…FGPA and KETD…YVAA. Residue 89-91 coordinates substrate; sequence NME. H102 contacts Zn(2+). E104 (proton donor) is an active-site residue. Zn(2+) is bound by residues C129 and C132.

It belongs to the cytidine and deoxycytidylate deaminase family. Homodimer. Zn(2+) serves as cofactor.

The enzyme catalyses cytidine + H2O + H(+) = uridine + NH4(+). The catalysed reaction is 2'-deoxycytidine + H2O + H(+) = 2'-deoxyuridine + NH4(+). Its function is as follows. This enzyme scavenges exogenous and endogenous cytidine and 2'-deoxycytidine for UMP synthesis. This chain is Cytidine deaminase, found in Photobacterium profundum (strain SS9).